The sequence spans 193 residues: Bifunctional protein PyrR (193 aa).

Residues 48-49 (TR), arginine 89, arginine 93, 110-118 (DDVLFSGRT), arginine 143, and valine 167 each bind substrate. A PRPP-binding motif is present at residues 106–118 (VVLVDDVLFSGRT).

This sequence belongs to the purine/pyrimidine phosphoribosyltransferase family. PyrR subfamily.

The enzyme catalyses UMP + diphosphate = 5-phospho-alpha-D-ribose 1-diphosphate + uracil. Its function is as follows. Regulates the transcription of the pyrimidine nucleotide (pyr) operon in response to exogenous pyrimidines. Functionally, also displays a weak uracil phosphoribosyltransferase activity which is not physiologically significant. The chain is Bifunctional protein PyrR from Streptomyces coelicolor (strain ATCC BAA-471 / A3(2) / M145).